A 443-amino-acid chain; its full sequence is Glucose-6-phosphate isomerase (443 aa).

The active-site Proton donor is Glu285. Catalysis depends on residues His306 and Lys420.

The protein belongs to the GPI family.

Its subcellular location is the cytoplasm. The enzyme catalyses alpha-D-glucose 6-phosphate = beta-D-fructose 6-phosphate. The protein operates within carbohydrate biosynthesis; gluconeogenesis. It functions in the pathway carbohydrate degradation; glycolysis; D-glyceraldehyde 3-phosphate and glycerone phosphate from D-glucose: step 2/4. Catalyzes the reversible isomerization of glucose-6-phosphate to fructose-6-phosphate. The sequence is that of Glucose-6-phosphate isomerase from Staphylococcus haemolyticus (strain JCSC1435).